The sequence spans 1893 residues: Transcription initiation factor TFIID subunit 1 (1893 aa).

In terms of domain architecture, Protein kinase 1 spans 1–435 (MGPGCDLLLR…VTQLHWEDDI (435 aa)). Ser-137 carries the phosphoserine; by autocatalysis modification. Disordered regions lie at residues 155–184 (LMPPPPPPPGPMKKDKDQDSITGVSENGEG) and 197–224 (ASEKVDFSSSSDSESEMGPQEATQAESE). The span at 156-165 (MPPPPPPPGP) shows a compositional bias: pro residues. The span at 197–208 (ASEKVDFSSSSD) shows a compositional bias: low complexity. Residue Ser-328 is modified to Phosphoserine; by autocatalysis. Positions 534–557 (IPDEKEEATSNSPSKESKKESSLK) are disordered. A histone acetyltransferase (HAT) region spans residues 538 to 997 (KEEATSNSPS…KIPNKPTQQK (460 aa)). Lys-565 is subject to N6-acetyllysine. Residues Lys-570 and Lys-583 each participate in a glycyl lysine isopeptide (Lys-Gly) (interchain with G-Cter in SUMO2) cross-link. Disordered regions lie at residues 990–1009 (PNKPTQQKDDKEPQPVKKTV), 1128–1148 (MLQNKKTSSQLSREREEQERK), 1158–1177 (GSAASGNNHRDDDTASVTSL), and 1254–1278 (RLKRNQEKEKLKGPPEKKPKKMKER). Basic and acidic residues-rich tracts occupy residues 995-1004 (QQKDDKEPQP) and 1139-1148 (SREREEQERK). Residues 1216–1294 (VRIRTTKDEE…CGACGAIGHM (79 aa)) constitute a DNA-binding region (HMG box; involved in promoter binding). Basic and acidic residues predominate over residues 1254–1270 (RLKRNQEKEKLKGPPEK). The tract at residues 1363-1650 (VLKFPKQQLP…TAKEAALEEA (288 aa)) is interaction with ASF1A and ASF1B. The short motif at 1372–1379 (PPKKKRRV) is the Nuclear localization signal element. Bromo domains are found at residues 1397–1505 (RRRT…LKEK) and 1519–1628 (LLDD…LTEY). Positions 1446-1893 (MDLQTLRENV…AGDSDLDSDE (448 aa)) constitute a Protein kinase 2 domain. Positions 1651-1676 (ELESLDPMTPGPYTPQPPDLYDTNTS) are disordered. The segment covering 1659–1668 (TPGPYTPQPP) has biased composition (pro residues). Residues Ser-1690, Ser-1693, Ala-1718, Glu-1721, and Gly-1723 each carry the phosphoserine modification. The tract at residues 1696-1893 (DIPSATPEKQ…AGDSDLDSDE (198 aa)) is disordered. Acidic residues-rich tracts occupy residues 1709–1723 (EGEDGDGDLADEEEG) and 1741–1756 (EGEDDEEDAGSDEEGD). Phosphoserine occurs at positions 1799, 1802, and 1820. The span at 1830-1840 (KSNTQDTSFSS) shows a compositional bias: polar residues. Residues 1846–1857 (VSEEEEDEEEEE) show a composition bias toward acidic residues. Phosphoserine is present on Ser-1847. Positions 1860–1869 (SGPSVLSQVH) are enriched in polar residues.

The protein belongs to the TAF1 family. As to quaternary structure, component of the TFIID basal transcription factor complex, composed of TATA-box-binding protein TBP, and a number of TBP-associated factors (TAFs), including TAF1, TAF2, TAF3, TAF4, TAF5, TAF6, TAF7, TAF8, TAF9, TAF10, TAF11, TAF12 and TAF13. Interacts with TAF7; the interaction is direct. TAF1, when part of the TFIID complex, interacts with C-terminus of TP53. Part of a TFIID-containing RNA polymerase II pre-initiation complex that is composed of TBP and at least GTF2A1, GTF2A2, GTF2E1, GTF2E2, GTF2F1, GTF2H2, GTF2H3, GTF2H4, GTF2H5, GTF2B, TCEA1, ERCC2, ERCC3, TAF1, TAF2, TAF3, TAF4, TAF5, TAF6, TAF7, TAF8, TAF9, TAF10, TAF11, TAF12 and TAF13. Component of some MLL1/MLL complex, at least composed of the core components KMT2A/MLL1, ASH2L, HCFC1/HCF1, WDR5 and RBBP5, as well as the facultative components BACC1, CHD8, E2F6, HSP70, INO80C, KANSL1, LAS1L, MAX, MCRS1, MGA, KAT8/MOF, PELP1, PHF20, PRP31, RING2, RUVB1/TIP49A, RUVB2/TIP49B, SENP3, TAF1, TAF4, TAF6, TAF7, TAF9 and TEX10. RB1 interacts with the N-terminal domain of TAF1. Interacts with ASF1A and ASF1B. Interacts (via bromo domains) with acetylated lysine residues on the N-terminus of histone H1.4, H2A, H2B, H3 and H4 (in vitro). In terms of assembly, (Microbial infection) Interacts with SV40 Large T antigen. (Microbial infection) Interacts with herpes simplex virus 1 ICP4. Mg(2+) serves as cofactor. Post-translationally, phosphorylated by casein kinase II in vitro.

The protein localises to the nucleus. The catalysed reaction is L-seryl-[protein] + ATP = O-phospho-L-seryl-[protein] + ADP + H(+). It catalyses the reaction L-threonyl-[protein] + ATP = O-phospho-L-threonyl-[protein] + ADP + H(+). The enzyme catalyses L-lysyl-[protein] + acetyl-CoA = N(6)-acetyl-L-lysyl-[protein] + CoA + H(+). With respect to regulation, autophosphorylates on Ser residues. Inhibited by retinoblastoma tumor suppressor protein, RB1. Binding to TAF7 or CIITA inhibits the histone acetyltransferase activity. In terms of biological role, the TFIID basal transcription factor complex plays a major role in the initiation of RNA polymerase II (Pol II)-dependent transcription. TFIID recognizes and binds promoters with or without a TATA box via its subunit TBP, a TATA-box-binding protein, and promotes assembly of the pre-initiation complex (PIC). The TFIID complex consists of TBP and TBP-associated factors (TAFs), including TAF1, TAF2, TAF3, TAF4, TAF5, TAF6, TAF7, TAF8, TAF9, TAF10, TAF11, TAF12 and TAF13. TAF1 is the largest component and core scaffold of the TFIID complex, involved in nucleating complex assembly. TAF1 forms a promoter DNA binding subcomplex of TFIID, together with TAF7 and TAF2. Contains novel N- and C-terminal Ser/Thr kinase domains which can autophosphorylate or transphosphorylate other transcription factors. Phosphorylates TP53 on 'Thr-55' which leads to MDM2-mediated degradation of TP53. Phosphorylates GTF2A1 and GTF2F1 on Ser residues. Possesses DNA-binding activity. Essential for progression of the G1 phase of the cell cycle. Exhibits histone acetyltransferase activity towards histones H3 and H4. The sequence is that of Transcription initiation factor TFIID subunit 1 from Homo sapiens (Human).